A 71-amino-acid polypeptide reads, in one-letter code: Small ribosomal subunit protein bS21 (71 aa).

The span at 48-59 (KAAAAVKRHAKK) shows a compositional bias: basic residues. The interval 48-71 (KAAAAVKRHAKKVQRENRKFQRLY) is disordered. The span at 60 to 71 (VQRENRKFQRLY) shows a compositional bias: basic and acidic residues.

It belongs to the bacterial ribosomal protein bS21 family.

In Teredinibacter turnerae (strain ATCC 39867 / T7901), this protein is Small ribosomal subunit protein bS21.